A 723-amino-acid polypeptide reads, in one-letter code: Catalase-peroxidase (723 aa).

The segment at residues 96 to 224 (WHAAGSYRVA…LAAVMMGLIY (129 aa)) is a cross-link (tryptophyl-tyrosyl-methioninium (Trp-Tyr) (with M-250)). Residue histidine 97 is the Proton acceptor of the active site. Residues 224-250 (YVNPEGVDGQPDPLKTAQDVRVTFARM) constitute a cross-link (tryptophyl-tyrosyl-methioninium (Tyr-Met) (with W-96)). Histidine 265 is a binding site for heme b.

Belongs to the peroxidase family. Peroxidase/catalase subfamily. In terms of assembly, homodimer or homotetramer. It depends on heme b as a cofactor. Formation of the three residue Trp-Tyr-Met cross-link is important for the catalase, but not the peroxidase activity of the enzyme.

The catalysed reaction is H2O2 + AH2 = A + 2 H2O. It carries out the reaction 2 H2O2 = O2 + 2 H2O. Its function is as follows. Bifunctional enzyme with both catalase and broad-spectrum peroxidase activity. In Leptothrix cholodnii (strain ATCC 51168 / LMG 8142 / SP-6) (Leptothrix discophora (strain SP-6)), this protein is Catalase-peroxidase.